Reading from the N-terminus, the 1087-residue chain is Synaptopodin-2 (1087 aa).

The region spanning 6–88 is the PDZ domain; it reads FICISMTGGA…SLHLLVKRPS (83 aa). 3 disordered regions span residues 24–52, 88–112, and 207–272; these read GKEE…EGDE, SSGT…HEGP, and GPIV…AGLP. Residues 101–112 are compositionally biased toward basic and acidic residues; the sequence is TTNHQHLTHEGP. Polar residues-rich tracts occupy residues 207–230 and 246–255; these read GPIV…SQLE and TSLTSSTSSG. Residues Ser-300, Ser-319, and Ser-320 each carry the phosphoserine modification. Residues 320–359 form a disordered region; that stretch reads SEGTEHGEDQRSGKDQSRPHKHRARHARLRRSESLSEKQV. The span at 322-337 shows a compositional bias: basic and acidic residues; that stretch reads GTEHGEDQRSGKDQSR. At Thr-323 the chain carries Phosphothreonine. Positions 338–348 are enriched in basic residues; sequence PHKHRARHARL. A compositionally biased stretch (basic and acidic residues) spans 349–359; it reads RRSESLSEKQV. A Nuclear localization signal motif is present at residues 388-396; the sequence is KKRRRRARK. Residues Ser-540, Ser-541, Ser-543, and Ser-546 each carry the phosphoserine modification. Positions 551-557 are interaction with YWHAB; sequence RSLASVP. Ser-555 carries the post-translational modification Phosphoserine; by PKA. 2 disordered regions span residues 581-817 and 832-863; these read AKPF…ALNL and NYTP…GMSG. Ser-596 is subject to Phosphoserine. Positions 599 to 804 are interaction with YWHAB; the sequence is RSVTSPISDF…AVSSIKIAQP (206 aa). Thr-602 carries the post-translational modification Phosphothreonine; by PKA and CaMK2. Ser-603 carries the phosphoserine modification. Pro residues-rich tracts occupy residues 609–622 and 636–647; these read PAPP…PPPE and AQPPPWPQPAPW. The PPPY motif motif lies at 611 to 614; that stretch reads PPPY. Tyr-614 carries the post-translational modification Phosphotyrosine. Ser-618 bears the Phosphoserine mark. Residues 656 to 796 form an F-actin binding region; the sequence is SEQIASRDER…PPNPPQVTAV (141 aa). Residues 656–909 are F-actin bundling activity; it reads SEQIASRDER…LPASWKYSSN (254 aa). Interaction with ACTN2 regions lie at residues 656 to 917 and 894 to 1087; these read SEQI…PPVA and QSPT…VVEE. A phosphoserine mark is found at Ser-697 and Ser-719. Residues 740-893 are actin binding; it reads AKQKTPPPVA…DTVQAHTVRA (154 aa). Position 744 is a phosphothreonine (Thr-744). Positions 751–777 are enriched in low complexity; it reads KPAVKSPSSSQPVAPVSPVWSPGVAPA. Residues Ser-767 and Ser-771 each carry the phosphoserine modification. Positions 781–797 are enriched in polar residues; it reads AFSTSNPPNPPQVTAVS. An interaction with FLNC region spans residues 803-1087; that stretch reads QPAAPPARPA…QVWKPSVVEE (285 aa). Phosphoserine is present on residues Ser-895, Ser-899, and Ser-903. Disordered stretches follow at residues 930-952, 970-1012, and 1037-1060; these read AIKS…KKPL, FTFQ…PTNA, and PVSA…STSY. Residues 993–1012 form an interaction with ZYX region; that stretch reads PAMKQALPPRQANVGSPTNA. Phosphoserine occurs at positions 1008 and 1050. Low complexity predominate over residues 1037 to 1051; sequence PVSASPVPVSVPTSP.

Belongs to the synaptopodin family. In terms of assembly, may self-associate in muscle cells under oxidative stress. Binds F-actin. Interacts with ACTN2; ACTN2 is proposed to anchor SYOP2 at Z lines in mature myocytes. Interacts with AKAP6, PPP3CA and CAMK2A. Interacts (phosphorylated form) with YWHAB; YWHAB competes with ACTN2 for interaction with SYNPO2. Interacts with KPNA2; mediating nuclear import of SYNOP2; dependent on interaction with YWHAB. Interacts with IPO13; may be implicated in SYNOP2 nuclear import. Interacts with ZYX, FLNC, ILK. Interacts with BAG3 (via WW 1 domain). May associate with the CASA complex consisting of HSPA8, HSPB8 and BAG3. Interacts with VPS18. Post-translationally, phosphorylated by PKA, and by CaMK2 at multiple sites. Dephosphorylated by calcineurin at Ser-555 and Thr-602; abrogating interaction with YWHAB and impairing nuclear import. Expressed in skeletal muscle, heart, colon, stomach, uterus and lung. Expression is restricted to muscle cell layers in colon, uterus and stomach.

Its subcellular location is the nucleus. It is found in the cytoplasm. The protein localises to the myofibril. The protein resides in the sarcomere. It localises to the z line. Its subcellular location is the cell junction. It is found in the focal adhesion. Its function is as follows. Has an actin-binding and actin-bundling activity. Can induce the formation of F-actin networks. At the sarcomeric Z lines is proposed to act as adapter protein that links nascent myofibers to the sarcolemma via ZYX and may play a role in early assembly and stabilization of the Z lines. Involved in autophagosome formation. May play a role in chaperone-assisted selective autophagy (CASA) involved in Z lines maintenance in striated muscle under mechanical tension; may link the client-processing CASA chaperone machinery to a membrane-tethering and fusion complex providing autophagosome membranes. Involved in regulation of cell migration. May be a tumor suppressor. The sequence is that of Synaptopodin-2 (Synpo2) from Mus musculus (Mouse).